A 353-amino-acid polypeptide reads, in one-letter code: Guanine nucleotide-binding protein subunit alpha (353 aa).

Residues 1–26 form a disordered region; that stretch reads MGCGMSVEEKEGKARNEEIENQLKRD. G2 is lipidated: N-myristoyl glycine. Residue C3 is the site of S-palmitoyl cysteine attachment. Positions 7–26 are enriched in basic and acidic residues; that stretch reads VEEKEGKARNEEIENQLKRD. A G-alpha domain is found at 32–353; sequence NEIKMLLLGA…QENLRLCGLI (322 aa). The tract at residues 35–48 is G1 motif; it reads KMLLLGAGESGKST. Positions 43, 44, 45, 46, 47, 48, 150, 175, 181, 203, 269, 270, 272, and 325 each coordinate GTP. S47 is a binding site for Mg(2+). A G2 motif region spans residues 173–181; it reads DVLRSRVKT. T181 is a binding site for Mg(2+). Residues 196–205 are G3 motif; sequence YRMFDVGGQR. The G4 motif stretch occupies residues 265–272; that stretch reads ILFLNKID. The interval 323–328 is G5 motif; the sequence is TCATDT.

The protein belongs to the G-alpha family. G(q) subfamily. G proteins are composed of 3 units; alpha, beta and gamma. The alpha chain contains the guanine nucleotide binding site. The cofactor is Mg(2+).

Functionally, guanine nucleotide-binding proteins (G proteins) are involved as modulators or transducers in various transmembrane signaling systems. The protein is Guanine nucleotide-binding protein subunit alpha (SSG-1) of Sporothrix schenckii (strain ATCC 58251 / de Perez 2211183) (Rose-picker's disease fungus).